A 143-amino-acid polypeptide reads, in one-letter code: Large ribosomal subunit protein uL11 (143 aa).

The protein belongs to the universal ribosomal protein uL11 family. In terms of assembly, part of the ribosomal stalk of the 50S ribosomal subunit. Interacts with L10 and the large rRNA to form the base of the stalk. L10 forms an elongated spine to which L12 dimers bind in a sequential fashion forming a multimeric L10(L12)X complex. One or more lysine residues are methylated.

Functionally, forms part of the ribosomal stalk which helps the ribosome interact with GTP-bound translation factors. The polypeptide is Large ribosomal subunit protein uL11 (Kineococcus radiotolerans (strain ATCC BAA-149 / DSM 14245 / SRS30216)).